Reading from the N-terminus, the 80-residue chain is Exodeoxyribonuclease 7 small subunit (80 aa).

The protein belongs to the XseB family. Heterooligomer composed of large and small subunits.

It is found in the cytoplasm. It catalyses the reaction Exonucleolytic cleavage in either 5'- to 3'- or 3'- to 5'-direction to yield nucleoside 5'-phosphates.. Bidirectionally degrades single-stranded DNA into large acid-insoluble oligonucleotides, which are then degraded further into small acid-soluble oligonucleotides. This is Exodeoxyribonuclease 7 small subunit from Cronobacter sakazakii (strain ATCC BAA-894) (Enterobacter sakazakii).